Reading from the N-terminus, the 497-residue chain is MTGTSNIPTHGKEHKDAPALLPLPAPNPHHTHAAHPGDPSHDRPPSRGKLFIKTHGCQMNEYDSAKMADVLTTTEALELTDNPEEADIILINTCSIREKAQEKVFSQLGRWRALKTNGRDVIIGVGGCVASQEGETIVKRAPYVDLVFGPQTLHRLPDMIRARREQNRPQIDISFPEIEKFDHLPTPRAEGPSAFVSIMEGCSKYCSFCVVPYTRGEEVSRPFEDVLTEIAHLATQGVREINLLGQNVNAYRGAMDPGPSNNTNPAAPPYADLGLLIRAIAQFESIGRIRFTTSHPLEFSDSLVEAYRDIPQLANHLHLPVQSGSDRILSAMKRGYTALEFKSKIRKLRAVRPDISISSDFIIGFPGESDTDFQKTMQLIEDIGFDQSFSFIYSRRPGTPASNLEDHTPDEIKRTRLEHLQKHINAYAADISKRMIGTVQTVLVEGPSKKNPNELTGKTENMRPVNFPGNPRLIGQFIDVHITEALTNSLRGRVHTN.

The disordered stretch occupies residues 1-50 (MTGTSNIPTHGKEHKDAPALLPLPAPNPHHTHAAHPGDPSHDRPPSRGKL). The MTTase N-terminal domain occupies 48–165 (GKLFIKTHGC…LPDMIRARRE (118 aa)). [4Fe-4S] cluster contacts are provided by Cys57, Cys94, Cys128, Cys202, Cys206, and Cys209. The Radical SAM core domain maps to 188-430 (RAEGPSAFVS…QKHINAYAAD (243 aa)). A TRAM domain is found at 433–496 (KRMIGTVQTV…TNSLRGRVHT (64 aa)).

It belongs to the methylthiotransferase family. MiaB subfamily. As to quaternary structure, monomer. Requires [4Fe-4S] cluster as cofactor.

The protein resides in the cytoplasm. It carries out the reaction N(6)-dimethylallyladenosine(37) in tRNA + (sulfur carrier)-SH + AH2 + 2 S-adenosyl-L-methionine = 2-methylsulfanyl-N(6)-dimethylallyladenosine(37) in tRNA + (sulfur carrier)-H + 5'-deoxyadenosine + L-methionine + A + S-adenosyl-L-homocysteine + 2 H(+). Catalyzes the methylthiolation of N6-(dimethylallyl)adenosine (i(6)A), leading to the formation of 2-methylthio-N6-(dimethylallyl)adenosine (ms(2)i(6)A) at position 37 in tRNAs that read codons beginning with uridine. The protein is tRNA-2-methylthio-N(6)-dimethylallyladenosine synthase of Xylella fastidiosa (strain M12).